The following is a 307-amino-acid chain: Pseudouridine-5'-phosphate glycosidase (307 aa).

Glu26 (proton donor) is an active-site residue. The substrate site is built by Lys88 and Val108. Asp140 is a binding site for Mn(2+). Substrate is bound at residue 142-144; it reads SAD. Lys161 (nucleophile) is an active-site residue.

It belongs to the pseudouridine-5'-phosphate glycosidase family. In terms of assembly, homotrimer. Mn(2+) serves as cofactor.

It catalyses the reaction D-ribose 5-phosphate + uracil = psi-UMP + H2O. Functionally, catalyzes the reversible cleavage of pseudouridine 5'-phosphate (PsiMP) to ribose 5-phosphate and uracil. Functions biologically in the cleavage direction, as part of a pseudouridine degradation pathway. This is Pseudouridine-5'-phosphate glycosidase from Clostridium botulinum (strain Langeland / NCTC 10281 / Type F).